The primary structure comprises 580 residues: Isocitrate lyase (580 aa).

106 to 108 lines the substrate pocket; it reads SGW. Asp-177 contributes to the Mg(2+) binding site. The Proton acceptor role is filled by Cys-215. Substrate contacts are provided by residues 216 to 217, Arg-252, 441 to 445, and Thr-476; these read GH and NLSPS. The Microbody targeting signal motif lies at 578 to 580; that stretch reads SRM.

This sequence belongs to the isocitrate lyase/PEP mutase superfamily. Isocitrate lyase family. Homotetramer. The cofactor is Mg(2+).

The protein localises to the glyoxysome. It catalyses the reaction D-threo-isocitrate = glyoxylate + succinate. It functions in the pathway carbohydrate metabolism; glyoxylate cycle; (S)-malate from isocitrate: step 1/2. Functionally, involved in storage lipid mobilization during the growth of higher plant seedling. The sequence is that of Isocitrate lyase (ICL 8) from Pinus taeda (Loblolly pine).